The following is a 246-amino-acid chain: uncharacterized protein (246 aa).

Residues 204–243 adopt a coiled-coil conformation; it reads TTKLKKLEKEIHELPYMLINGKITYEEYKKRIREIEKEIG.

This is an uncharacterized protein from Aquifex aeolicus (strain VF5).